Reading from the N-terminus, the 551-residue chain is Cysteine desulfurase SufS (551 aa).

Residues M1–S22 form the signal peptide. An N6-(pyridoxal phosphate)lysine modification is found at K327. The Cysteine persulfide intermediate role is filled by C500.

Belongs to the class-V pyridoxal-phosphate-dependent aminotransferase family. Csd subfamily. In terms of assembly, monomer. Interacts with SufE; interaction enhances cysteine desulfurase activity of SufS. It depends on pyridoxal 5'-phosphate as a cofactor.

It localises to the plastid. The protein localises to the apicoplast. It carries out the reaction (sulfur carrier)-H + L-cysteine = (sulfur carrier)-SH + L-alanine. It participates in cofactor biosynthesis; iron-sulfur cluster biosynthesis. Functionally, catalyzes sulfur activation and mobilization in sulfur mobilization (SUF) pathway for iron-sulfur (Fe-S) cluster biogenesis. Active when in complex with a partner protein SufE. Required for apicoplast maintenance. Plays a role in the development of sporozoites in oocysts in mosquitoes. The chain is Cysteine desulfurase SufS from Plasmodium vivax.